Here is a 232-residue protein sequence, read N- to C-terminus: Uracil-DNA glycosylase (232 aa).

D71 (proton acceptor) is an active-site residue.

The protein belongs to the uracil-DNA glycosylase (UDG) superfamily. UNG family.

The protein localises to the cytoplasm. The catalysed reaction is Hydrolyzes single-stranded DNA or mismatched double-stranded DNA and polynucleotides, releasing free uracil.. Excises uracil residues from the DNA which can arise as a result of misincorporation of dUMP residues by DNA polymerase or due to deamination of cytosine. The sequence is that of Uracil-DNA glycosylase from Azotobacter vinelandii (strain DJ / ATCC BAA-1303).